A 230-amino-acid chain; its full sequence is Acyl-protein thioesterase 1 (230 aa).

Active-site charge relay system residues include Ser-119, Asp-174, and His-208. Position 224 is an N6-acetyllysine (Lys-224).

Belongs to the AB hydrolase superfamily. AB hydrolase 2 family. As to quaternary structure, homodimer. Ubiquitous. Detected at low levels in all tissues tested.

The protein resides in the cytoplasm. The protein localises to the cell membrane. It is found in the nucleus membrane. It localises to the endoplasmic reticulum. It catalyses the reaction S-hexadecanoyl-L-cysteinyl-[protein] + H2O = L-cysteinyl-[protein] + hexadecanoate + H(+). The catalysed reaction is 1-hexadecanoyl-sn-glycero-3-phosphocholine + H2O = sn-glycerol 3-phosphocholine + hexadecanoate + H(+). The enzyme catalyses a 1-(9Z-octadecenoyl)-2-acyl-sn-glycero-3-phosphocholine + H2O = a 2-acyl-sn-glycero-3-phosphocholine + (9Z)-octadecenoate + H(+). In terms of biological role, acts as an acyl-protein thioesterase. Hydrolyzes fatty acids from S-acylated cysteine residues in proteins such as trimeric G alpha proteins or HRAS. Acts as a palmitoyl thioesterase that catalyzes depalmitoylation of proteins, such as ADRB2, KCNMA1 and SQSTM1. Acts as a negative regulator of autophagy by mediating palmitoylation of SQSTM1, decreasing affinity between SQSTM1 and ATG8 proteins and recruitment of ubiquitinated cargo proteins to autophagosomes. Acts as a lysophospholipase and hydrolyzes lysophosphatidylcholine (lyso-PC). Also hydrolyzes lysophosphatidylethanolamine (lyso-PE), lysophosphatidylinositol (lyso-PI) and lysophosphatidylserine (lyso-PS). Has much higher thioesterase activity than lysophospholipase activity. Contributes to the production of lysophosphatidic acid (LPA) during blood coagulation by recognizing and cleaving plasma phospholipids to generate lysophospholipids which in turn act as substrates for ENPP2 to produce LPA. The chain is Acyl-protein thioesterase 1 (Lypla1) from Rattus norvegicus (Rat).